A 137-amino-acid chain; its full sequence is Histone H2B.3 (137 aa).

The segment covering 1–37 has biased composition (basic and acidic residues); the sequence is KPAEKKPAEKTPVAEKAPAEKKPKAGKKLPKDAAAGD. The interval 1-45 is disordered; that stretch reads KPAEKKPAEKTPVAEKAPAEKKPKAGKKLPKDAAAGDKKKKRSKK. K27 and K28 each carry N6-acetyllysine. K133 is covalently cross-linked (Glycyl lysine isopeptide (Lys-Gly) (interchain with G-Cter in ubiquitin)).

Belongs to the histone H2B family. As to quaternary structure, the nucleosome is a histone octamer containing two molecules each of H2A, H2B, H3 and H4 assembled in one H3-H4 heterotetramer and two H2A-H2B heterodimers. The octamer wraps approximately 147 bp of DNA. Post-translationally, can be acetylated to formH2BK33ac and H2BK34ac. In terms of processing, monoubiquitinated to form H2BK143ub1; may give a specific tag for epigenetic transcriptional activation. As to expression, ubiquitous. Highest level in shoots, fruits and young flower buds, including petals, anthers and ovules.

It localises to the nucleus. The protein resides in the chromosome. In terms of biological role, core component of nucleosome. Nucleosomes wrap and compact DNA into chromatin, limiting DNA accessibility to the cellular machineries which require DNA as a template. Histones thereby play a central role in transcription regulation, DNA repair, DNA replication and chromosomal stability. DNA accessibility is regulated via a complex set of post-translational modifications of histones, also called histone code, and nucleosome remodeling. The protein is Histone H2B.3 (H2B-3) of Solanum lycopersicum (Tomato).